Consider the following 381-residue polypeptide: Galactose-1-phosphate uridylyltransferase (381 aa).

Zn(2+) contacts are provided by Cys-65 and Cys-68. 90 to 91 (ND) is a binding site for UDP-alpha-D-glucose. His-131 provides a ligand contact to Zn(2+). Asn-175 lines the UDP-alpha-D-glucose pocket. His-186 is a Zn(2+) binding site. The Tele-UMP-histidine intermediate role is filled by His-188. Residue Gln-190 coordinates UDP-alpha-D-glucose. Residues Glu-204, His-306, His-323, and His-325 each coordinate Fe cation. Residues 338 to 341 (KFMV) and 343 to 344 (FE) each bind UDP-alpha-D-glucose.

The protein belongs to the galactose-1-phosphate uridylyltransferase type 1 family. In terms of assembly, homodimer. Zn(2+) serves as cofactor.

It catalyses the reaction alpha-D-galactose 1-phosphate + UDP-alpha-D-glucose = alpha-D-glucose 1-phosphate + UDP-alpha-D-galactose. It functions in the pathway carbohydrate metabolism; galactose metabolism. The chain is Galactose-1-phosphate uridylyltransferase (GAL7) from Cryptococcus neoformans var. neoformans serotype D (strain B-3501A) (Filobasidiella neoformans).